Here is a 301-residue protein sequence, read N- to C-terminus: GTPase Era (301 aa).

The Era-type G domain occupies Tyr-7–Glu-175. The G1 stretch occupies residues Gly-15 to Ser-22. Gly-15–Ser-22 contributes to the GTP binding site. The tract at residues Gln-41–His-45 is G2. The tract at residues Asp-62–Gly-65 is G3. Residues Asp-62–Leu-66 and Asn-124–Asp-127 contribute to the GTP site. A G4 region spans residues Asn-124–Asp-127. A G5 region spans residues Ile-154–Ala-156. One can recognise a KH type-2 domain in the interval Leu-206–Ser-283.

It belongs to the TRAFAC class TrmE-Era-EngA-EngB-Septin-like GTPase superfamily. Era GTPase family. In terms of assembly, monomer.

It is found in the cytoplasm. The protein resides in the cell inner membrane. In terms of biological role, an essential GTPase that binds both GDP and GTP, with rapid nucleotide exchange. Plays a role in 16S rRNA processing and 30S ribosomal subunit biogenesis and possibly also in cell cycle regulation and energy metabolism. The polypeptide is GTPase Era (Shigella dysenteriae serotype 1 (strain Sd197)).